A 450-amino-acid chain; its full sequence is Molybdate-anion transporter (450 aa).

A run of 12 helical transmembrane segments spans residues 1-21 (MLVT…GLEL), 43-63 (LDFY…APYL), 79-99 (ILYV…SSLV), 128-148 (FVLL…FSAF), 176-196 (FWNH…ACWM), 198-218 (LGPV…GALA), 249-269 (VLLL…FVFL), 278-298 (GAPL…GSSL), 311-331 (PMHL…MLTF), 344-364 (FIAF…MSFL), 376-396 (GVLN…LLVL), and 409-429 (FSIC…LFTV).

The protein belongs to the major facilitator superfamily.

Its subcellular location is the cell membrane. Its function is as follows. Mediates high-affinity intracellular uptake of the rare oligo-element molybdenum. The chain is Molybdate-anion transporter (MFSD5) from Bos taurus (Bovine).